A 601-amino-acid chain; its full sequence is Aspartate--tRNA(Asp/Asn) ligase (601 aa).

An L-aspartate-binding site is contributed by Glu187. The tract at residues 211 to 214 (QQFK) is aspartate. L-aspartate is bound by residues Arg233 and His461. An ATP-binding site is contributed by 233–235 (RDE). Residue Glu495 coordinates ATP. Residue Arg502 coordinates L-aspartate. Position 547 to 550 (547 to 550 (GLDR)) interacts with ATP.

Belongs to the class-II aminoacyl-tRNA synthetase family. Type 1 subfamily. Homodimer.

It localises to the cytoplasm. It carries out the reaction tRNA(Asx) + L-aspartate + ATP = L-aspartyl-tRNA(Asx) + AMP + diphosphate. Functionally, aspartyl-tRNA synthetase with relaxed tRNA specificity since it is able to aspartylate not only its cognate tRNA(Asp) but also tRNA(Asn). Reaction proceeds in two steps: L-aspartate is first activated by ATP to form Asp-AMP and then transferred to the acceptor end of tRNA(Asp/Asn). In Pelodictyon phaeoclathratiforme (strain DSM 5477 / BU-1), this protein is Aspartate--tRNA(Asp/Asn) ligase.